Consider the following 124-residue polypeptide: Small ribosomal subunit protein uS12cz/uS12cy (124 aa).

The protein belongs to the universal ribosomal protein uS12 family. In terms of assembly, part of the 30S ribosomal subunit.

The protein localises to the plastid. It is found in the chloroplast. Functionally, with S4 and S5 plays an important role in translational accuracy. Located at the interface of the 30S and 50S subunits. The sequence is that of Small ribosomal subunit protein uS12cz/uS12cy (rps12-A) from Zea mays (Maize).